Reading from the N-terminus, the 908-residue chain is Probable RNA-directed DNA polymerase from transposon X-element (908 aa).

One can recognise a Reverse transcriptase domain in the interval 481 to 752 (AIVRLQYFPY…NAAKYLGVLL (272 aa)). Residues 883 to 908 (RPPRRLNRRQPRDLITRSPLTRVRRS) are disordered.

It depends on Mg(2+) as a cofactor. The cofactor is Mn(2+).

The catalysed reaction is DNA(n) + a 2'-deoxyribonucleoside 5'-triphosphate = DNA(n+1) + diphosphate. This chain is Probable RNA-directed DNA polymerase from transposon X-element (X-element\ORF2), found in Drosophila melanogaster (Fruit fly).